The chain runs to 208 residues: Large ribosomal subunit protein uL4 (208 aa).

The interval 46-84 (QGTHKAKTRAEVRGGGRKPFRQKGTGNARQGSTRSPLMI) is disordered. Residues 69-80 (GTGNARQGSTRS) show a composition bias toward polar residues.

This sequence belongs to the universal ribosomal protein uL4 family. Part of the 50S ribosomal subunit.

Its function is as follows. One of the primary rRNA binding proteins, this protein initially binds near the 5'-end of the 23S rRNA. It is important during the early stages of 50S assembly. It makes multiple contacts with different domains of the 23S rRNA in the assembled 50S subunit and ribosome. Functionally, forms part of the polypeptide exit tunnel. The protein is Large ribosomal subunit protein uL4 of Chlorobium limicola (strain DSM 245 / NBRC 103803 / 6330).